The sequence spans 290 residues: Protoheme IX farnesyltransferase 1 (290 aa).

Helical transmembrane passes span 8-28 (ITKPGIIFGNLISVAAGFFLA), 36-56 (FLLLLTTLVGVGLVIASGCVV), 85-105 (AAFVYALVLLLNGTALLFQVV), 108-128 (LSAVVVLLGYVFYVFFYTMWY), 131-151 (NSVYGTLVGSISGAVPPLVGY), 152-172 (LAVTNYISLEATLLFVMFCLW), 211-231 (AYVVAFGVVAIGLFMLGEAGY), and 269-289 (LLVVMGISGVLGLELIPLPFI).

Belongs to the UbiA prenyltransferase family. Protoheme IX farnesyltransferase subfamily.

Its subcellular location is the cell inner membrane. It carries out the reaction heme b + (2E,6E)-farnesyl diphosphate + H2O = Fe(II)-heme o + diphosphate. It functions in the pathway porphyrin-containing compound metabolism; heme O biosynthesis; heme O from protoheme: step 1/1. In terms of biological role, converts heme B (protoheme IX) to heme O by substitution of the vinyl group on carbon 2 of heme B porphyrin ring with a hydroxyethyl farnesyl side group. The sequence is that of Protoheme IX farnesyltransferase 1 from Vibrio campbellii (strain ATCC BAA-1116).